The sequence spans 325 residues: Lipoyl synthase (325 aa).

[4Fe-4S] cluster-binding residues include cysteine 72, cysteine 77, cysteine 83, cysteine 98, cysteine 102, cysteine 105, and serine 312. The Radical SAM core domain maps to 84 to 301 (FAGGTATFMI…AEEGERMGFK (218 aa)).

This sequence belongs to the radical SAM superfamily. Lipoyl synthase family. [4Fe-4S] cluster serves as cofactor.

It is found in the cytoplasm. The enzyme catalyses [[Fe-S] cluster scaffold protein carrying a second [4Fe-4S](2+) cluster] + N(6)-octanoyl-L-lysyl-[protein] + 2 oxidized [2Fe-2S]-[ferredoxin] + 2 S-adenosyl-L-methionine + 4 H(+) = [[Fe-S] cluster scaffold protein] + N(6)-[(R)-dihydrolipoyl]-L-lysyl-[protein] + 4 Fe(3+) + 2 hydrogen sulfide + 2 5'-deoxyadenosine + 2 L-methionine + 2 reduced [2Fe-2S]-[ferredoxin]. The protein operates within protein modification; protein lipoylation via endogenous pathway; protein N(6)-(lipoyl)lysine from octanoyl-[acyl-carrier-protein]: step 2/2. Catalyzes the radical-mediated insertion of two sulfur atoms into the C-6 and C-8 positions of the octanoyl moiety bound to the lipoyl domains of lipoate-dependent enzymes, thereby converting the octanoylated domains into lipoylated derivatives. The sequence is that of Lipoyl synthase from Azotobacter vinelandii (strain DJ / ATCC BAA-1303).